Reading from the N-terminus, the 339-residue chain is Anthranilate phosphoribosyltransferase (339 aa).

5-phospho-alpha-D-ribose 1-diphosphate is bound by residues Gly-82, 85 to 86 (GD), 92 to 95 (NIST), 110 to 118 (KHGNSSISS), and Ser-122. Residue Gly-82 participates in anthranilate binding. A Mg(2+)-binding site is contributed by Ser-94. Residue Asn-113 participates in anthranilate binding. An anthranilate-binding site is contributed by Arg-168. Positions 227 and 228 each coordinate Mg(2+).

The protein belongs to the anthranilate phosphoribosyltransferase family. In terms of assembly, homodimer. Requires Mg(2+) as cofactor.

The catalysed reaction is N-(5-phospho-beta-D-ribosyl)anthranilate + diphosphate = 5-phospho-alpha-D-ribose 1-diphosphate + anthranilate. Its pathway is amino-acid biosynthesis; L-tryptophan biosynthesis; L-tryptophan from chorismate: step 2/5. Its function is as follows. Catalyzes the transfer of the phosphoribosyl group of 5-phosphorylribose-1-pyrophosphate (PRPP) to anthranilate to yield N-(5'-phosphoribosyl)-anthranilate (PRA). The chain is Anthranilate phosphoribosyltransferase from Ruthia magnifica subsp. Calyptogena magnifica.